We begin with the raw amino-acid sequence, 452 residues long: 5'-nucleotidase domain-containing protein 1 (452 aa).

Asp-16 functions as the Nucleophile in the catalytic mechanism. Mg(2+) is bound by residues Asp-16 and Asp-18. The active-site Proton donor is the Asp-18. Lys-171 is modified (N6-acetyllysine). Asp-313 is a Mg(2+) binding site. Positions 339–361 (GDKDGKPEESEPEEKKGKYEGSK) are enriched in basic and acidic residues. The interval 339–365 (GDKDGKPEESEPEEKKGKYEGSKAKPL) is disordered.

Belongs to the 5'(3')-deoxyribonucleotidase family.

This Bos taurus (Bovine) protein is 5'-nucleotidase domain-containing protein 1 (NT5DC1).